Consider the following 665-residue polypeptide: Filensin (665 aa).

Residues 1 to 40 (MYRRSYVFQTRKEQYEHADEASRAAEPERPADEGWAGATS) are head. Ser-5 is modified (phosphoserine). An IF rod domain is found at 40–320 (SLAALQGLGE…RIIEIEGNRL (281 aa)). The tract at residues 41–75 (LAALQGLGERVAAHVQRARALEQRHAGLRRQLDAF) is coil 1A. N-acetylalanine is present on Ala-42. Residues 76 to 84 (QRLGELAGP) are linker 1. Residues 85-184 (EDALARQVES…RHKKNLLEVQ (100 aa)) are coil 1B. The linker 12 stretch occupies residues 185–201 (TYISILQQIIHTTPPAS). The interval 202 to 320 (IVTSGMREEK…RIIEIEGNRL (119 aa)) is coil 2. Positions 321–665 (TSAFIETPIP…DKKKSGEKSS (345 aa)) are tail. Ser-341 and Ser-420 each carry phosphoserine. 2 disordered regions span residues 410-439 (SKFE…QISK) and 506-614 (YDGQ…KGPP). Gly-434 is lipidated: N-myristoyl glycine. A Phosphoserine modification is found at Ser-513. A compositionally biased stretch (basic and acidic residues) spans 556–571 (PEEKREGEERDEESRR). Ser-665 bears the Phosphoserine mark.

The protein belongs to the intermediate filament family. Part of a complex required for lens intermediate filament formation composed of BFSP1, BFSP2 and CRYAA. Identified in a complex that contains VIM, EZR, AHNAK, BFSP1, BFSP2, ANK2, PLEC, PRX and spectrin. Found in a complex composed of PPL (via C-terminal linker domain), BFSP1 and BFSP2 in the retinal lens. Within the complex interacts with BFSP2. Interacts (via C-terminus) with MIP (via C-terminus) in aged lens fiber cells. In terms of processing, proteolytically cleaved during lens cell fiber differentiation with increased fragmentation as fiber cell age increases. Post-translationally, myristoylated at Gly-434 following proteolytic cleavage at Asp-433. Acetylated at Ala-42 following proteolytic cleavage at Leu-41. In terms of tissue distribution, expressed in the cortex and nucleus of the retina lens (at protein level).

It is found in the cell membrane. The protein resides in the cytoplasm. The protein localises to the cytoskeleton. Its subcellular location is the cell cortex. Functionally, required for the correct formation of lens intermediate filaments as part of a complex composed of BFSP1, BFSP2 and CRYAA. Involved in altering the calcium regulation of MIP water permeability. This is Filensin (BFSP1) from Homo sapiens (Human).